The sequence spans 280 residues: C-type lectin domain family 1 member A (280 aa).

A disordered region spans residues methionine 1–serine 44. Residues methionine 1 to leucine 52 are Cytoplasmic-facing. The segment covering threonine 18–threonine 30 has biased composition (polar residues). A compositionally biased stretch (basic and acidic residues) spans arginine 31–alanine 42. Residues threonine 53–phenylalanine 73 form a helical; Signal-anchor for type II membrane protein membrane-spanning segment. At glutamine 74 to aspartate 280 the chain is on the extracellular side. 2 N-linked (GlcNAc...) asparagine glycosylation sites follow: asparagine 95 and asparagine 169. Positions histidine 144–glutamate 258 constitute a C-type lectin domain. 2 disulfide bridges follow: cysteine 165-cysteine 257 and cysteine 236-cysteine 249.

As to expression, expressed preferentially in dendritic cells.

The protein resides in the membrane. This chain is C-type lectin domain family 1 member A (CLEC1A), found in Homo sapiens (Human).